A 545-amino-acid chain; its full sequence is Carboxypeptidase N subunit 2 (545 aa).

The signal sequence occupies residues 1–21 (MLPGAWLLWTSLLLLARPAQP). The LRRNT domain occupies 22–49 (CPMGCDCFVQEVFCSDEELATVPLDIPP). N-linked (GlcNAc...) asparagine glycosylation is found at N74, N111, and N119. 12 LRR repeats span residues 98 to 119 (RLED…IFSN), 122 to 143 (SLGK…LFQH), 146 to 167 (ALES…LFQP), 170 to 191 (HLKT…LFHP), 194 to 215 (SLQT…VFGK), 218 to 239 (SLQE…VFSQ), 242 to 263 (CLER…IFAS), 266 to 287 (NLTF…LFAH), 290 to 311 (CLVG…TFAH), 314 to 335 (NLRS…IFRD), 338 to 359 (ELVK…LFQN), and 362 to 383 (KLEL…IFDT). Residue N228 is glycosylated (N-linked (GlcNAc...) asparagine). N266 carries N-linked (GlcNAc...) asparagine glycosylation. N348 and N359 each carry an N-linked (GlcNAc...) asparagine glycan. One can recognise an LRRCT domain in the interval 395-447 (NPWQCDCHLAYLFNWLQQYTDRLLNIQTYCAGPAYLKGQVVPALNEKQLVCPV). N518 carries an N-linked (GlcNAc...) asparagine glycan.

As to quaternary structure, tetramer of two catalytic chains and two glycosylated inactive chains. Post-translationally, whether or not any Cys residues participate in intrachain bonds is unknown, but they do not form interchain disulfide bonds with the 50 kDa catalytic subunit.

Its subcellular location is the secreted. In terms of biological role, the 83 kDa subunit binds and stabilizes the catalytic subunit at 37 degrees Celsius and keeps it in circulation. Under some circumstances it may be an allosteric modifier of the catalytic subunit. The protein is Carboxypeptidase N subunit 2 (CPN2) of Homo sapiens (Human).